A 385-amino-acid polypeptide reads, in one-letter code: FK506-binding protein 5 (385 aa).

Residues 26–115 (TNFVSVHYDA…RFEVELIGFW (90 aa)) enclose the PPIase FKBP-type domain. TPR repeat units follow at residues 128–161 (AEKK…IQDL), 177–210 (VSIQ…DMTK), and 211–244 (IKAY…AIGL).

The catalysed reaction is [protein]-peptidylproline (omega=180) = [protein]-peptidylproline (omega=0). Its activity is regulated as follows. Inhibited by both FK506 and rapamycin. Functionally, PPIases accelerate the folding of proteins. It catalyzes the cis-trans isomerization of proline imidic peptide bonds in oligopeptides. The polypeptide is FK506-binding protein 5 (FKBP5) (Rhizopus delemar (strain RA 99-880 / ATCC MYA-4621 / FGSC 9543 / NRRL 43880) (Mucormycosis agent)).